The following is a 381-amino-acid chain: Fe-S cluster assembly protein DRE2 (381 aa).

The N-terminal SAM-like domain stretch occupies residues Ala8 to Val165. A disordered region spans residues Arg100–Glu134. A compositionally biased stretch (low complexity) spans Gly108–Gly118. The span at Ser119–Glu128 shows a compositional bias: gly residues. Positions Pro166–Met273 are linker. Positions 283, 294, 297, and 299 each coordinate [2Fe-2S] cluster. The tract at residues Cys283 to Cys299 is fe-S binding site A. Positions 344, 347, 355, and 358 each coordinate [4Fe-4S] cluster. Short sequence motifs (cx2C motif) lie at residues Cys344–Cys347 and Cys355–Cys358. Residues Cys344 to Cys358 form a fe-S binding site B region.

It belongs to the anamorsin family. Monomer. Interacts with TAH18. Interacts with MIA40. Requires [2Fe-2S] cluster as cofactor. [4Fe-4S] cluster serves as cofactor.

Its subcellular location is the cytoplasm. It localises to the mitochondrion intermembrane space. Functionally, component of the cytosolic iron-sulfur (Fe-S) protein assembly (CIA) machinery required for the maturation of extramitochondrial Fe-S proteins. Part of an electron transfer chain functioning in an early step of cytosolic Fe-S biogenesis, facilitating the de novo assembly of a [4Fe-4S] cluster on the scaffold complex CFD1-NBP35. Electrons are transferred to DRE2 from NADPH via the FAD- and FMN-containing protein TAH18. TAH18-DRE2 are also required for the assembly of the diferric tyrosyl radical cofactor of ribonucleotide reductase (RNR), probably by providing electrons for reduction during radical cofactor maturation in the catalytic small subunit RNR2. This chain is Fe-S cluster assembly protein DRE2, found in Paracoccidioides brasiliensis (strain Pb18).